A 706-amino-acid chain; its full sequence is G2/M phase-specific E3 ubiquitin-protein ligase (706 aa).

The segment at 11–51 adopts a C2HC pre-PHD-type zinc-finger fold; that stretch reads NLACVFCRKNDDCPNKYGEKKTKEKWNLTVHYYCLLMSSGI. The PHD-type 1 zinc finger occupies 79–128; that stretch reads LKCCVCKKNGASIGCVAPRCKRSYHFPCGLQRECIFQFTGNFASFCWNHR. The segment at 143 to 193 adopts a PHD-type 2; degenerate zinc-finger fold; that stretch reads PCTICLEFIEPIPSYNILRSPCCKNAWFHRDCLQVQAINAGVFFFRCTICS. A PHD-type 3 zinc finger spans residues 237–286; it reads RCRCKEGRDYNAPDSKWEIKRCQCCGSSGTHLACSSLRSWEQNWECLECR. The region spanning 371 to 698 is the HECT domain; sequence IWTSALDAFR…IRNTLKLEKE (328 aa).

The protein localises to the nucleus. The protein resides in the nucleolus. Its subcellular location is the cytoplasm. The catalysed reaction is S-ubiquitinyl-[E2 ubiquitin-conjugating enzyme]-L-cysteine + [acceptor protein]-L-lysine = [E2 ubiquitin-conjugating enzyme]-L-cysteine + N(6)-ubiquitinyl-[acceptor protein]-L-lysine.. The protein operates within protein modification; protein ubiquitination. Functionally, E3 ubiquitin-protein ligase which accepts ubiquitin from an E2 ubiquitin-conjugating enzyme in the form of a thioester and then directly transfers the ubiquitin to targeted substrates. Essential in early embryonic development to prevent apoptotic death. In Macaca fascicularis (Crab-eating macaque), this protein is G2/M phase-specific E3 ubiquitin-protein ligase (G2E3).